The sequence spans 890 residues: Inter-alpha-trypsin inhibitor heavy chain H3 (890 aa).

The first 20 residues, 1–20 (MAFAWWPCLILALLSSLAAS), serve as a signal peptide directing secretion. Residues 21-34 (GFPRSPFRLLGKRS) constitute a propeptide that is removed on maturation. One can recognise a VIT domain in the interval 29-158 (LLGKRSLPEG…KVTFELTYEE (130 aa)). An N-linked (GlcNAc...) asparagine glycan is attached at Asn91. In terms of domain architecture, VWFA spans 284–467 (NVAFVIDISG…LQLQGFYEEV (184 aa)). Residue Asn580 is glycosylated (N-linked (GlcNAc...) asparagine). An Aspartate 1-(chondroitin 4-sulfate)-ester modification is found at Asp651. Positions 652–890 (PHFIIQIPEK…HTDYIVPNLF (239 aa)) are excised as a propeptide.

The protein belongs to the ITIH family. In terms of assembly, I-alpha-I plasma protease inhibitors are assembled from one or two heavy chains (HC) and one light chain, bikunin. Pre-alpha-inhibitor (P-alpha-I) is composed of ITIH3/HC3 and bikunin. In terms of processing, heavy chains are linked to bikunin via chondroitin 4-sulfate esterified to the alpha-carboxyl of the C-terminal aspartate after propeptide cleavage.

The protein localises to the secreted. Functionally, may act as a carrier of hyaluronan in serum or as a binding protein between hyaluronan and other matrix protein, including those on cell surfaces in tissues to regulate the localization, synthesis and degradation of hyaluronan which are essential to cells undergoing biological processes. This Homo sapiens (Human) protein is Inter-alpha-trypsin inhibitor heavy chain H3 (ITIH3).